The chain runs to 213 residues: Kynurenine formamidase (213 aa).

Trp-20 contributes to the substrate binding site. 3 residues coordinate Zn(2+): His-50, His-54, and Asp-56. The active-site Proton donor/acceptor is His-60. Zn(2+) contacts are provided by His-161 and Glu-173.

This sequence belongs to the Cyclase 1 superfamily. KynB family. As to quaternary structure, homodimer. The cofactor is Zn(2+).

It carries out the reaction N-formyl-L-kynurenine + H2O = L-kynurenine + formate + H(+). Its pathway is amino-acid degradation; L-tryptophan degradation via kynurenine pathway; L-kynurenine from L-tryptophan: step 2/2. In terms of biological role, catalyzes the hydrolysis of N-formyl-L-kynurenine to L-kynurenine, the second step in the kynurenine pathway of tryptophan degradation. The chain is Kynurenine formamidase from Pseudomonas paraeruginosa (strain DSM 24068 / PA7) (Pseudomonas aeruginosa (strain PA7)).